Reading from the N-terminus, the 130-residue chain is Small ribosomal subunit protein uS11 (130 aa).

It belongs to the universal ribosomal protein uS11 family. As to quaternary structure, part of the 30S ribosomal subunit. Interacts with proteins S7 and S18. Binds to IF-3.

Functionally, located on the platform of the 30S subunit, it bridges several disparate RNA helices of the 16S rRNA. Forms part of the Shine-Dalgarno cleft in the 70S ribosome. In Xanthomonas oryzae pv. oryzae (strain MAFF 311018), this protein is Small ribosomal subunit protein uS11.